The primary structure comprises 707 residues: Nucleolin (707 aa).

Residues 1–308 (MVKLAKAGKT…KVEGSEPTTP (308 aa)) are disordered. N6-acetyllysine occurs at positions 9, 15, and 16. The span at 24-46 (VEEDSEDEEMSEDEDDSSGEEEV) shows a compositional bias: acidic residues. Phosphoserine is present on residues Ser28, Ser34, Ser40, and Ser41. Positions 56-92 (ATTTPAKKVVVSQTKKAAVPTPAKKAAVTPGKKAVAT) are enriched in low complexity. Residues 58 to 65 (TTPAKKVV) form repeat 1. The 8 X 8 AA tandem repeats of X-T-P-X-K-K-X-X stretch occupies residues 58–135 (TTPAKKVVVS…GAATPAKGAK (78 aa)). Position 67 is a phosphoserine (Ser67). 4 positions are modified to phosphothreonine: Thr69, Thr76, Thr84, and Thr92. Tandem repeats lie at residues 75 to 82 (PTPAKKAA), 83 to 90 (VTPGKKAV), and 91 to 98 (ATPAKKNI). Lys96 carries the N6-acetyllysine modification. Thr99 carries the post-translational modification Phosphothreonine. The stretch at 99–104 (TPAKVI) is one 5; truncated repeat. Lys102 is modified (N6-acetyllysine). Repeat unit 6 spans residues 105-112 (PTPGKKGA). Phosphothreonine is present on Thr106. 2 positions are modified to N6-acetyllysine: Lys109 and Lys116. A run of 2 repeats spans residues 120 to 127 (PTPGKKGA) and 128 to 135 (ATPAKGAK). Thr121 is modified (phosphothreonine). Residues 121-137 (TPGKKGAATPAKGAKNG) show a composition bias toward low complexity. Residue Lys124 is modified to N6-acetyllysine. Phosphoserine occurs at positions 145 and 157. The span at 145 to 170 (SDEDEDEEDEDDSDEDEDDEEEDEFE) shows a compositional bias: acidic residues. Low complexity predominate over residues 179–188 (PAKAAPAAPA). Residues Ser189 and Ser212 each carry the phosphoserine modification. Residues 189-217 (SEDEEDDEDEDDEEDDDEEEEDDSEEEVM) are compositionally biased toward acidic residues. Thr220 is subject to Phosphothreonine. Residues 241–273 (EEEDDEEEDEDDEDEDDEEEDDEDDDEEEEEEE) show a composition bias toward acidic residues. Over residues 286-302 (MTKQKEAPEAKKQKVEG) the composition is skewed to basic and acidic residues. Lys299 is covalently cross-linked (Glycyl lysine isopeptide (Lys-Gly) (interchain with G-Cter in SUMO1); alternate). Residue Lys299 forms a Glycyl lysine isopeptide (Lys-Gly) (interchain with G-Cter in SUMO2); alternate linkage. At Ser303 the chain carries Phosphoserine. RRM domains lie at 309–385 (FNLF…KPKG) and 395–468 (RTLL…YTGE). Lys320 carries the post-translational modification N6-acetyllysine. Lys326 is covalently cross-linked (Glycyl lysine isopeptide (Lys-Gly) (interchain with G-Cter in SUMO1); alternate). Lys326 is covalently cross-linked (Glycyl lysine isopeptide (Lys-Gly) (interchain with G-Cter in SUMO2); alternate). Lys350 carries the N6-acetyllysine modification. Residue Ser358 is modified to Phosphoserine. Phosphothreonine is present on Thr369. Residue Lys372 forms a Glycyl lysine isopeptide (Lys-Gly) (interchain with G-Cter in SUMO2) linkage. Lys379 participates in a covalent cross-link: Glycyl lysine isopeptide (Lys-Gly) (interchain with G-Cter in SUMO2); alternate. The residue at position 379 (Lys379) is an N6-acetyllysine; alternate. Lys400 is subject to N6-acetyllysine. Ser403 carries the post-translational modification Phosphoserine. Thr407 carries the post-translational modification Phosphothreonine. Residues Lys429 and Lys446 each carry the N6-acetyllysine modification. Phosphoserine occurs at positions 460 and 462. 2 positions are modified to N6-acetyllysine: Lys469 and Lys478. RRM domains are found at residues 487–561 (KTLV…LQGS) and 569–644 (KTLF…WAKP). A Glycyl lysine isopeptide (Lys-Gly) (interchain with G-Cter in SUMO2); alternate cross-link involves residue Lys514. Lys514 carries the post-translational modification N6-acetyllysine; alternate. 2 positions are modified to N6-acetyllysine: Lys522 and Lys569. Residue Lys574 forms a Glycyl lysine isopeptide (Lys-Gly) (interchain with G-Cter in SUMO2); alternate linkage. Lys574 carries the N6-acetyllysine; alternate modification. Phosphoserine is present on Ser577. Lys586 is covalently cross-linked (Glycyl lysine isopeptide (Lys-Gly) (interchain with G-Cter in SUMO1); alternate). A Glycyl lysine isopeptide (Lys-Gly) (interchain with G-Cter in SUMO2); alternate cross-link involves residue Lys586. Phosphoserine is present on residues Ser588 and Ser616. A Glycyl lysine isopeptide (Lys-Gly) (interchain with G-Cter in SUMO2) cross-link involves residue Lys621. The tract at residues 639 to 707 (LDWAKPKGEG…KPQGKKTKFE (69 aa)) is disordered. Lys643 is modified (N6-acetyllysine). Residues 647–696 (EGGFGGRGGGRGGFGGRGGGRGGRGGFGGRGRGGFGGRGGFRGGRGGGGD) are compositionally biased toward gly residues. Asymmetric dimethylarginine is present on residues Arg653, Arg657, Arg663, Arg667, Arg670, Arg676, Arg678, Arg684, and Arg688. An Asymmetric dimethylarginine; alternate modification is found at Arg691. The residue at position 691 (Arg691) is an Omega-N-methylarginine; alternate.

In terms of assembly, identified in a IGF2BP1-dependent mRNP granule complex containing untranslated mRNAs. Component of the SWAP complex that consists of NPM1, NCL/nucleolin, PARP1 and SWAP70. Component of a complex which is at least composed of HTATSF1/Tat-SF1, the P-TEFb complex components CDK9 and CCNT1, RNA polymerase II, SUPT5H, and NCL/nucleolin. Interacts with AICDA. Interacts with APTX. Interacts with C1QBP. Interacts with ERBB4. Interacts (via C-terminus) with FMR1 isoform 6 (via N-terminus). Interacts with GZF1; this interaction is important for nucleolar localization of GZF1. Interacts with NSUN2. Interacts with NVL. Interacts (via N-terminus domain) with SETX. Interacts (via RRM1 and C-terminal RRM4/Arg/Gly-rich domains) with TERT; the interaction is important for nucleolar localization of TERT. Interacts with WDR46. Interacts with ZFP36. Interacts with LRRC34. Interacts with RRP1B. Interacts with HNRNPU; this interaction occurs during mitosis. Interacts with RIOK1; RIOK1 recruits NCL to PRMT5 for symmetrically methylation. Interacts with ZBTB7B. Interacts with MDK; this interaction promotes NCL clustering and lateral movements of this complex into lipid rafts leading to MDK internalization. Interacts with HDGF. Interacts with ALKBH2. Interacts with IGFBP5; this interaction is necessary for IGFBP5 localization to the nucleus. Interacts with DDX24 (when ubiquitinated); this interaction may be important during ribosome biogenesis. Some glutamate residues are glycylated by TTLL8. This modification occurs exclusively on glutamate residues and results in a glycine chain on the gamma-carboxyl group. In terms of processing, symmetrically methylated by PRMT5. As to expression, expressed in B-cells that have been induced to switch to various Ig isotypes.

The protein localises to the nucleus. It is found in the nucleolus. The protein resides in the cytoplasm. Its function is as follows. Nucleolin is the major nucleolar protein of growing eukaryotic cells. It is found associated with intranucleolar chromatin and pre-ribosomal particles. It induces chromatin decondensation by binding to histone H1. It is thought to play a role in pre-rRNA transcription and ribosome assembly. May play a role in the process of transcriptional elongation. Binds RNA oligonucleotides with 5'-UUAGGG-3' repeats more tightly than the telomeric single-stranded DNA 5'-TTAGGG-3' repeats. This chain is Nucleolin (Ncl), found in Mus musculus (Mouse).